The primary structure comprises 390 residues: Fer-related kinase 1 (390 aa).

In terms of domain architecture, SH2 spans 23 to 119 (YYHGMVPRQD…ASGAKIRRPM (97 aa)). The Protein kinase domain maps to 131–386 (IVANKKLGEG…SIHKKLREFY (256 aa)). Residues 137 to 145 (LGEGAFGDV) and Lys-161 contribute to the ATP site. The Proton acceptor role is filled by Asp-252.

Belongs to the protein kinase superfamily. Tyr protein kinase family. Fes/fps subfamily. In terms of assembly, interacts with hmp-2. Requires Mn(2+) as cofactor.

It localises to the nucleus. The protein resides in the cytoplasm. The protein localises to the cell junction. It is found in the cell membrane. The enzyme catalyses L-tyrosyl-[protein] + ATP = O-phospho-L-tyrosyl-[protein] + ADP + H(+). In terms of biological role, non-receptor tyrosine-protein kinase which plays a role in morphogenesis by regulating the epidermal enclosure of the embryo, independently of its kinase activity. Prevents hyperactivation of the Wnt signaling pathway during endoderm development, probably by preventing hmp-2 nuclear translocation. The chain is Fer-related kinase 1 from Caenorhabditis elegans.